Reading from the N-terminus, the 262-residue chain is Indole-3-glycerol phosphate synthase (262 aa).

This sequence belongs to the TrpC family.

The catalysed reaction is 1-(2-carboxyphenylamino)-1-deoxy-D-ribulose 5-phosphate + H(+) = (1S,2R)-1-C-(indol-3-yl)glycerol 3-phosphate + CO2 + H2O. Its pathway is amino-acid biosynthesis; L-tryptophan biosynthesis; L-tryptophan from chorismate: step 4/5. The chain is Indole-3-glycerol phosphate synthase from Nitratiruptor sp. (strain SB155-2).